The following is a 358-amino-acid chain: 3-isopropylmalate dehydrogenase (358 aa).

Positions 92, 102, 130, and 224 each coordinate substrate. Mg(2+)-binding residues include aspartate 224, aspartate 248, and aspartate 252. Residue 282–294 (GSAPDIAGQGIAN) participates in NAD(+) binding.

It belongs to the isocitrate and isopropylmalate dehydrogenases family. LeuB type 1 subfamily. As to quaternary structure, homodimer. The cofactor is Mg(2+). Requires Mn(2+) as cofactor.

It localises to the cytoplasm. The catalysed reaction is (2R,3S)-3-isopropylmalate + NAD(+) = 4-methyl-2-oxopentanoate + CO2 + NADH. Its pathway is amino-acid biosynthesis; L-leucine biosynthesis; L-leucine from 3-methyl-2-oxobutanoate: step 3/4. Its function is as follows. Catalyzes the oxidation of 3-carboxy-2-hydroxy-4-methylpentanoate (3-isopropylmalate) to 3-carboxy-4-methyl-2-oxopentanoate. The product decarboxylates to 4-methyl-2 oxopentanoate. The polypeptide is 3-isopropylmalate dehydrogenase (Bordetella avium (strain 197N)).